The chain runs to 70 residues: DNA-directed RNA polymerase subunit omega (70 aa).

The protein belongs to the RNA polymerase subunit omega family. The RNAP catalytic core consists of 2 alpha, 1 beta, 1 beta' and 1 omega subunit. When a sigma factor is associated with the core the holoenzyme is formed, which can initiate transcription.

It carries out the reaction RNA(n) + a ribonucleoside 5'-triphosphate = RNA(n+1) + diphosphate. Functionally, promotes RNA polymerase assembly. Latches the N- and C-terminal regions of the beta' subunit thereby facilitating its interaction with the beta and alpha subunits. In Bacillus mycoides (strain KBAB4) (Bacillus weihenstephanensis), this protein is DNA-directed RNA polymerase subunit omega.